The following is a 396-amino-acid chain: Elongation factor Tu (396 aa).

One can recognise a tr-type G domain in the interval 10–205 (KPHVNIGTIG…ACDDSIPDPE (196 aa)). The segment at 19–26 (GHVDHGKT) is G1. 19-26 (GHVDHGKT) provides a ligand contact to GTP. Thr26 lines the Mg(2+) pocket. The tract at residues 62–66 (GITIN) is G2. The segment at 83–86 (DAPG) is G3. GTP-binding positions include 83–87 (DAPGH) and 138–141 (NKCD). The interval 138-141 (NKCD) is G4. The interval 175–177 (SAL) is G5.

It belongs to the TRAFAC class translation factor GTPase superfamily. Classic translation factor GTPase family. EF-Tu/EF-1A subfamily. Monomer.

The protein localises to the cytoplasm. The catalysed reaction is GTP + H2O = GDP + phosphate + H(+). GTP hydrolase that promotes the GTP-dependent binding of aminoacyl-tRNA to the A-site of ribosomes during protein biosynthesis. The chain is Elongation factor Tu from Corynebacterium diphtheriae (strain ATCC 700971 / NCTC 13129 / Biotype gravis).